The chain runs to 349 residues: Phenylalanine--tRNA ligase alpha subunit (349 aa).

Glu261 contributes to the Mg(2+) binding site.

The protein belongs to the class-II aminoacyl-tRNA synthetase family. Phe-tRNA synthetase alpha subunit type 1 subfamily. In terms of assembly, tetramer of two alpha and two beta subunits. It depends on Mg(2+) as a cofactor.

Its subcellular location is the cytoplasm. The enzyme catalyses tRNA(Phe) + L-phenylalanine + ATP = L-phenylalanyl-tRNA(Phe) + AMP + diphosphate + H(+). This Leuconostoc citreum (strain KM20) protein is Phenylalanine--tRNA ligase alpha subunit.